The sequence spans 576 residues: Enolase 4 (576 aa).

The disordered stretch occupies residues 187 to 232 (ELRNEAMSEAPPQATPTSAPAKDKKGNDKGKKGNITENPLPPAEPP). Positions 196-206 (APPQATPTSAP) are enriched in low complexity. Residues 207 to 217 (AKDKKGNDKGK) show a composition bias toward basic and acidic residues. Positions 302 and 524 each coordinate substrate.

The protein belongs to the enolase family.

It catalyses the reaction (2R)-2-phosphoglycerate = phosphoenolpyruvate + H2O. Its pathway is carbohydrate degradation; glycolysis; pyruvate from D-glyceraldehyde 3-phosphate: step 4/5. This is Enolase 4 (eno4) from Danio rerio (Zebrafish).